Reading from the N-terminus, the 187-residue chain is EP300-interacting inhibitor of differentiation 1 (187 aa).

The segment at 1-118 (MSEMAELSEL…YDYPEEEQLS (118 aa)) is disordered. Acidic residues-rich tracts occupy residues 52 to 63 (LEEEGPMEEEEA) and 93 to 116 (FESEDEGEEFDDWEDDYDYPEEEQ). The interval 54-120 (EEGPMEEEEA…YPEEEQLSGA (67 aa)) is interaction with NR0B2. The short motif at 178-182 (LGCDE) is the LXCXE motif element.

In terms of assembly, interacts via its LXCXE motif with the entire pocket region of RB1. Interacts with EP300, NR0B2 and TRIM27. In terms of processing, ubiquitinated in U2OS osteosarcoma cells and is rapidly degraded by proteasome as cells exit the cell cycle exit. In terms of tissue distribution, widely expressed. Most abundantly expressed in heart, skeletal muscle, pancreas, brain and testis. Expressed at much lower levels in placenta and peripheral blood leukocyte. Barely detectable in lung. Also weakly expressed in lung carcinoma A-549 and various leukemia cell lines.

Its subcellular location is the nucleus. The protein localises to the cytoplasm. Interacts with RB1 and EP300 and acts as a repressor of MYOD1 transactivation. Inhibits EP300 and CBP histone acetyltransferase activity. May be involved in coupling cell cycle exit to the transcriptional activation of genes required for cellular differentiation. May act as a candidate coinhibitory factor for NR0B2 that can be directly linked to transcription inhibitory mechanisms. This Homo sapiens (Human) protein is EP300-interacting inhibitor of differentiation 1.